The chain runs to 325 residues: Dehydrogenase/reductase SDR family member 7B (325 aa).

Residues 1–17 (MVSAATRKSLLRARVMD) lie on the Cytoplasmic side of the membrane. The helical; Signal-anchor for type II membrane protein transmembrane segment at 18-38 (FITSTAILPLLLGCVGLFSLF) threads the bilayer. Topologically, residues 39–325 (KLLQWLRMRA…ARKERKSKHS (287 aa)) are lumenal. The NAD(+) site is built by Ser-62 and Leu-64. Ser-194 is a substrate binding site. The NAD(+) site is built by Tyr-207, Lys-211, and Thr-242. Residue Tyr-207 is the Proton acceptor of the active site.

It belongs to the short-chain dehydrogenases/reductases (SDR) family.

The protein resides in the endoplasmic reticulum membrane. Functionally, putative oxidoreductase. This Bos taurus (Bovine) protein is Dehydrogenase/reductase SDR family member 7B (DHRS7B).